A 617-amino-acid chain; its full sequence is Phosphatidylinositol-3,5-bisphosphate 3-phosphatase MTMR6 (617 aa).

Residues 1-101 (MEHIRTTKVE…YNSLLQLSKQ (101 aa)) form the GRAM domain. Residues 2–141 (EHIRTTKVEQ…AEYERMGVPN (140 aa)) are interaction with RAB1B. Tyr108 bears the Phosphotyrosine mark. Residues 124 to 499 (GWQLIDLAAE…FNFKFWRNMY (376 aa)) enclose the Myotubularin phosphatase domain. The a 1,2-diacyl-sn-glycero-3-phospho-(1D-myo-inositol-3,5-bisphosphate) site is built by Asn248, Asn273, and Ile274. Positions 248, 273, and 274 each coordinate a 1,2-diacyl-sn-glycero-3-phospho-(1D-myo-inositol-3-phosphate). The active-site Phosphocysteine intermediate is Cys336. Residues Ser337, Asp338, Gly339, Trp340, Asp341, Arg342, Lys378, and Arg382 each contribute to the a 1,2-diacyl-sn-glycero-3-phospho-(1D-myo-inositol-3,5-bisphosphate) site. Ser337, Asp338, Gly339, Trp340, Asp341, and Arg342 together coordinate a 1,2-diacyl-sn-glycero-3-phospho-(1D-myo-inositol-3-phosphate). Arg382 contributes to the a 1,2-diacyl-sn-glycero-3-phospho-(1D-myo-inositol-3-phosphate) binding site. Phosphoserine is present on residues Ser557, Ser585, and Ser607.

The protein belongs to the protein-tyrosine phosphatase family. Non-receptor class myotubularin subfamily. As to quaternary structure, homodimer. Heterodimer (via C-terminus) with MTMR9 (via C-terminus). Interacts with ALKBH4. Interacts with KCNN4. Interacts (via GRAM domain) with RAB1B (in GDP-bound form); the interaction regulates MTMR6 recruitment to the endoplasmic reticulum-Golgi intermediate compartment. In terms of tissue distribution, isoform 1: Ubiquitously expressed including in heart, brain, spleen, lung, liver, muscle, kidney and testis (at protein level). Isoform 2: Expressed in testis (at protein level).

It is found in the cytoplasm. The protein resides in the endoplasmic reticulum-Golgi intermediate compartment. It localises to the cell projection. The protein localises to the ruffle membrane. Its subcellular location is the endoplasmic reticulum. It catalyses the reaction a 1,2-diacyl-sn-glycero-3-phospho-(1D-myo-inositol-3,5-bisphosphate) + H2O = a 1,2-diacyl-sn-glycero-3-phospho-(1D-myo-inositol-5-phosphate) + phosphate. The catalysed reaction is a 1,2-diacyl-sn-glycero-3-phospho-(1D-myo-inositol-3-phosphate) + H2O = a 1,2-diacyl-sn-glycero-3-phospho-(1D-myo-inositol) + phosphate. It carries out the reaction 1,2-dioctanoyl-sn-glycero-3-phospho-(1D-myo-inositol-3,5-bisphosphate) + H2O = 1,2-dioctanoyl-sn-glycero-3-phospho-(1D-myo-inositol-5-phosphate) + phosphate. The enzyme catalyses 1,2-dioctanoyl-sn-glycero-3-phospho-(1-D-myo-inositol-3-phosphate) + H2O = 1,2-dioctanoyl-sn-glycero-3-phospho-(1D-myo-inositol) + phosphate. Allosterically activated by phosphatidylserine and/or phosphatidylinositol 4-phosphate (PtdIns(4)P), and phosphatidylinositol 5-phosphate (PtdIns(5)P). Interaction with MTMR9 increases catalytic activity towards phosphatidylinositol 3,5-bisphosphate. In terms of biological role, lipid phosphatase that specifically dephosphorylates the D-3 position of phosphatidylinositol 3-phosphate and phosphatidylinositol 3,5-bisphosphate, generating phosphatidylinositol and phosphatidylinositol 5-phosphate. Binds with high affinity to phosphatidylinositol 3,5-bisphosphate (PtdIns(3,5)P2) but also to phosphatidylinositol 3-phosphate (PtdIns(3)P), phosphatidylinositol 4-phosphate (PtdIns(4)P), and phosphatidylinositol 5-phosphate (PtdIns(5)P), phosphatidic acid and phosphatidylserine. Negatively regulates ER-Golgi protein transport. Probably in association with MTMR9, plays a role in the late stages of macropinocytosis by dephosphorylating phosphatidylinositol 3-phosphate in membrane ruffles. Acts as a negative regulator of KCNN4/KCa3.1 channel activity in CD4(+) T-cells possibly by decreasing intracellular levels of phosphatidylinositol 3-phosphate. Negatively regulates proliferation of reactivated CD4(+) T-cells. In complex with MTMR9, negatively regulates DNA damage-induced apoptosis. The formation of the MTMR6-MTMR9 complex stabilizes both MTMR6 and MTMR9 protein levels. This Mus musculus (Mouse) protein is Phosphatidylinositol-3,5-bisphosphate 3-phosphatase MTMR6.